The following is a 701-amino-acid chain: Polyribonucleotide nucleotidyltransferase (701 aa).

D487 and D493 together coordinate Mg(2+). A KH domain is found at 554–613 (PTMLAMKIDQDKIRDVIGKGGATIRAICEETKASIDIEDDGSIKIFGETKEAAEAAKQRV). The region spanning 623–691 (GKIYVGKVER…NRGRIKLSIK (69 aa)) is the S1 motif domain.

It belongs to the polyribonucleotide nucleotidyltransferase family. Component of the RNA degradosome, which is a multiprotein complex involved in RNA processing and mRNA degradation. Mg(2+) is required as a cofactor.

Its subcellular location is the cytoplasm. The enzyme catalyses RNA(n+1) + phosphate = RNA(n) + a ribonucleoside 5'-diphosphate. Functionally, involved in mRNA degradation. Catalyzes the phosphorolysis of single-stranded polyribonucleotides processively in the 3'- to 5'-direction. The chain is Polyribonucleotide nucleotidyltransferase from Stutzerimonas stutzeri (strain A1501) (Pseudomonas stutzeri).